The chain runs to 357 residues: MEEGMNILHDFGIQSTRYLQVNYQDSQDWFILVSVIADLRNAFYVLFPIWFHLKETVGINLLWVAVVGDWFNLVFKWILFGQRPYWWVLDTDYYSNSSVPIIKQFPVTCETGPGSPSGHAMGAAGVYYVMVTSTLAIFRGKKKPTYGFRCLNVILWLGFWAVQLNVCLSRIYLAAHFPHQVVAGVLSGIAVAETFSHIRGIYNASLRKYCLITIFLFGFALGFYLLLKGLGVDLLWTLEKAKRWCERPEWVHLDTTPFASLFKNLGTLLGLGLALNSSMYRKSCKGELSKLLPFRFACIVASLVLLHLFDSLKPPSQVELIFYILSFCKSATVPFASVSLIPYCLARILGQTHKKSL.

At 1 to 28 (MEEGMNILHDFGIQSTRYLQVNYQDSQD) the chain is on the lumenal side. Residues 29–49 (WFILVSVIADLRNAFYVLFPI) traverse the membrane as a helical segment. Topologically, residues 50-60 (WFHLKETVGIN) are cytoplasmic. Residues 61–81 (LLWVAVVGDWFNLVFKWILFG) traverse the membrane as a helical segment. Over 82 to 117 (QRPYWWVLDTDYYSNSSVPIIKQFPVTCETGPGSPS) the chain is Lumenal. Residue arginine 83 participates in substrate binding. N-linked (GlcNAc...) asparagine glycosylation occurs at asparagine 96. Residues 118–138 (GHAMGAAGVYYVMVTSTLAIF) traverse the membrane as a helical segment. The Proton donor role is filled by histidine 119. At 139–147 (RGKKKPTYG) the chain is on the cytoplasmic side. A helical transmembrane segment spans residues 148–168 (FRCLNVILWLGFWAVQLNVCL). Topologically, residues 169–179 (SRIYLAAHFPH) are lumenal. Residue arginine 170 coordinates substrate. The active-site Nucleophile is histidine 176. The helical transmembrane segment at 180 to 202 (QVVAGVLSGIAVAETFSHIRGIY) threads the bilayer. The Cytoplasmic segment spans residues 203–211 (NASLRKYCL). A helical membrane pass occupies residues 212-232 (ITIFLFGFALGFYLLLKGLGV). Over 233–254 (DLLWTLEKAKRWCERPEWVHLD) the chain is Lumenal. A helical transmembrane segment spans residues 255-275 (TTPFASLFKNLGTLLGLGLAL). The Cytoplasmic portion of the chain corresponds to 276 to 291 (NSSMYRKSCKGELSKL). Residues 292–312 (LPFRFACIVASLVLLHLFDSL) traverse the membrane as a helical segment. Residues 313 to 320 (KPPSQVEL) lie on the Lumenal side of the membrane. Residues 321 to 341 (IFYILSFCKSATVPFASVSLI) form a helical membrane-spanning segment. The Cytoplasmic portion of the chain corresponds to 342–357 (PYCLARILGQTHKKSL). The short motif at 354–357 (KKSL) is the Prevents secretion from ER element.

It belongs to the glucose-6-phosphatase family. Liver and kidney.

The protein localises to the endoplasmic reticulum membrane. The enzyme catalyses D-glucose 6-phosphate + H2O = D-glucose + phosphate. It functions in the pathway carbohydrate biosynthesis; gluconeogenesis. In terms of biological role, hydrolyzes glucose-6-phosphate to glucose in the endoplasmic reticulum. Forms with the glucose-6-phosphate transporter (SLC37A4/G6PT) the complex responsible for glucose production in the terminal step of glycogenolysis and gluconeogenesis. Hence, it is the key enzyme in homeostatic regulation of blood glucose levels. This is Glucose-6-phosphatase catalytic subunit 1 (G6pc1) from Mus musculus (Mouse).